We begin with the raw amino-acid sequence, 175 residues long: MGIKSIIIDQKQVEAGCNAALKWCNEHFAGKQVIVLGILKGCIPFLGKLISQFTFDLQLDFVAVASYHGGSRQQEAPKIVLDMSHDPKGKDILLIEDIVDSGRSIKLVLDLLHTRKAKSVILVSFIEKLKPREADIKVDYSCFKNQDEFLVGFGLDYQGFYRNLPYVGVFDPEDN.

Residues lysine 40 and glycine 41 each coordinate diphosphate. Mg(2+) is bound by residues glutamate 96 and aspartate 97. Aspartate 100 serves as the catalytic Proton acceptor. Residues lysine 128, 149–150 (FL), and aspartate 156 each bind GMP. Residue arginine 162 coordinates diphosphate.

This sequence belongs to the purine/pyrimidine phosphoribosyltransferase family. The cofactor is Mg(2+).

Its subcellular location is the cytoplasm. The catalysed reaction is IMP + diphosphate = hypoxanthine + 5-phospho-alpha-D-ribose 1-diphosphate. It catalyses the reaction GMP + diphosphate = guanine + 5-phospho-alpha-D-ribose 1-diphosphate. It participates in purine metabolism; IMP biosynthesis via salvage pathway; IMP from hypoxanthine: step 1/1. It functions in the pathway purine metabolism; GMP biosynthesis via salvage pathway; GMP from guanine: step 1/1. In terms of biological role, purine salvage pathway enzyme that catalyzes the transfer of the ribosyl-5-phosphate group from 5-phospho-alpha-D-ribose 1-diphosphate (PRPP) to the N9 position of the 6-oxopurines hypoxanthine and guanine to form the corresponding ribonucleotides IMP (inosine 5'-monophosphate) and GMP (guanosine 5'-monophosphate), with the release of PPi. This chain is Hypoxanthine-guanine phosphoribosyltransferase (hpt), found in Mycoplasma pneumoniae (strain ATCC 29342 / M129 / Subtype 1) (Mycoplasmoides pneumoniae).